Here is a 617-residue protein sequence, read N- to C-terminus: Chaperone protein HscA homolog (617 aa).

This sequence belongs to the heat shock protein 70 family.

Functionally, chaperone involved in the maturation of iron-sulfur cluster-containing proteins. Has a low intrinsic ATPase activity which is markedly stimulated by HscB. The protein is Chaperone protein HscA homolog of Aliivibrio salmonicida (strain LFI1238) (Vibrio salmonicida (strain LFI1238)).